Reading from the N-terminus, the 91-residue chain is MYLTSEIKKEIFKTNGTAKSATDTGSPESQIALFSHRIAHLTEHLKVNKKDYSTQLGLMKLVGKRRRLLNYLQKTEISRYRAIIAQLNLRK.

The protein belongs to the universal ribosomal protein uS15 family. As to quaternary structure, part of the 30S ribosomal subunit. Forms a bridge to the 50S subunit in the 70S ribosome, contacting the 23S rRNA.

Its function is as follows. One of the primary rRNA binding proteins, it binds directly to 16S rRNA where it helps nucleate assembly of the platform of the 30S subunit by binding and bridging several RNA helices of the 16S rRNA. Functionally, forms an intersubunit bridge (bridge B4) with the 23S rRNA of the 50S subunit in the ribosome. This chain is Small ribosomal subunit protein uS15, found in Cytophaga hutchinsonii (strain ATCC 33406 / DSM 1761 / CIP 103989 / NBRC 15051 / NCIMB 9469 / D465).